Reading from the N-terminus, the 476-residue chain is Cysteine--tRNA ligase (476 aa).

Position 29 (cysteine 29) interacts with Zn(2+). The 'HIGH' region signature appears at 31–41 (PTVYDYTHIGH). Residues cysteine 209, histidine 234, and glutamate 238 each coordinate Zn(2+). The short motif at 266 to 270 (KMSKS) is the 'KMSKS' region element. Lysine 269 serves as a coordination point for ATP.

Belongs to the class-I aminoacyl-tRNA synthetase family. Zn(2+) serves as cofactor.

Its subcellular location is the cytoplasm. The enzyme catalyses tRNA(Cys) + L-cysteine + ATP = L-cysteinyl-tRNA(Cys) + AMP + diphosphate. This Thermococcus kodakarensis (strain ATCC BAA-918 / JCM 12380 / KOD1) (Pyrococcus kodakaraensis (strain KOD1)) protein is Cysteine--tRNA ligase.